We begin with the raw amino-acid sequence, 337 residues long: Pyrophosphate--fructose 6-phosphate 1-phosphotransferase (337 aa).

Gly10 is a diphosphate binding site. Position 101 (Asp101) interacts with Mg(2+). Residues 124 to 126 (TID), Arg161, 168 to 170 (MGR), Glu220, Arg257, and 263 to 266 (HTIR) contribute to the substrate site. Asp126 (proton acceptor) is an active-site residue.

It belongs to the phosphofructokinase type A (PFKA) family. Mixed-substrate PFK group III subfamily. Homodimer or homotrimer. Mg(2+) serves as cofactor.

The protein resides in the cytoplasm. The enzyme catalyses beta-D-fructose 6-phosphate + diphosphate = beta-D-fructose 1,6-bisphosphate + phosphate + H(+). It participates in carbohydrate degradation; glycolysis; D-glyceraldehyde 3-phosphate and glycerone phosphate from D-glucose: step 3/4. Non-allosteric. In terms of biological role, catalyzes the phosphorylation of D-fructose 6-phosphate, the first committing step of glycolysis. Uses inorganic phosphate (PPi) as phosphoryl donor instead of ATP like common ATP-dependent phosphofructokinases (ATP-PFKs), which renders the reaction reversible, and can thus function both in glycolysis and gluconeogenesis. Consistently, PPi-PFK can replace the enzymes of both the forward (ATP-PFK) and reverse (fructose-bisphosphatase (FBPase)) reactions. This is Pyrophosphate--fructose 6-phosphate 1-phosphotransferase from Thermoproteus tenax (strain ATCC 35583 / DSM 2078 / JCM 9277 / NBRC 100435 / Kra 1).